The sequence spans 167 residues: Crossover junction endodeoxyribonuclease RuvC (167 aa).

Catalysis depends on residues Asp7, Glu67, and Asp140. The Mg(2+) site is built by Asp7, Glu67, and Asp140.

It belongs to the RuvC family. Homodimer which binds Holliday junction (HJ) DNA. The HJ becomes 2-fold symmetrical on binding to RuvC with unstacked arms; it has a different conformation from HJ DNA in complex with RuvA. In the full resolvosome a probable DNA-RuvA(4)-RuvB(12)-RuvC(2) complex forms which resolves the HJ. The cofactor is Mg(2+).

The protein resides in the cytoplasm. The catalysed reaction is Endonucleolytic cleavage at a junction such as a reciprocal single-stranded crossover between two homologous DNA duplexes (Holliday junction).. Its function is as follows. The RuvA-RuvB-RuvC complex processes Holliday junction (HJ) DNA during genetic recombination and DNA repair. Endonuclease that resolves HJ intermediates. Cleaves cruciform DNA by making single-stranded nicks across the HJ at symmetrical positions within the homologous arms, yielding a 5'-phosphate and a 3'-hydroxyl group; requires a central core of homology in the junction. The consensus cleavage sequence is 5'-(A/T)TT(C/G)-3'. Cleavage occurs on the 3'-side of the TT dinucleotide at the point of strand exchange. HJ branch migration catalyzed by RuvA-RuvB allows RuvC to scan DNA until it finds its consensus sequence, where it cleaves and resolves the cruciform DNA. In Moorella thermoacetica (strain ATCC 39073 / JCM 9320), this protein is Crossover junction endodeoxyribonuclease RuvC.